The following is a 333-amino-acid chain: Mitochondrial thiamine pyrophosphate carrier 1 (333 aa).

3 Solcar repeats span residues 12-115, 129-215, and 222-318; these read GSRL…ITQF, PPSV…LRPR, and PYSS…ALKL. A run of 6 helical transmembrane segments spans residues 17–35, 96–112, 135–155, 190–209, 221–238, and 293–310; these read VTAA…IAPL, LLYV…YRSI, FIAG…LDLL, GLGP…FCVY, LPYS…SVMA, and GLTV…VTMW.

This sequence belongs to the mitochondrial carrier (TC 2.A.29) family.

Its subcellular location is the mitochondrion inner membrane. In terms of biological role, mitochondrial transporter that mediates uptake of thiamine pyrophosphate (ThPP) into mitochondria. In Neurospora crassa (strain ATCC 24698 / 74-OR23-1A / CBS 708.71 / DSM 1257 / FGSC 987), this protein is Mitochondrial thiamine pyrophosphate carrier 1 (tpc-1).